Reading from the N-terminus, the 262-residue chain is Type III pantothenate kinase (262 aa).

Position 9 to 16 (9 to 16) interacts with ATP; it reads DAGNSRIK. Substrate contacts are provided by residues Tyr96 and 103–106; that span reads GSDR. Asp105 serves as the catalytic Proton acceptor. Thr129 contributes to the ATP binding site. A substrate-binding site is contributed by Thr189.

Belongs to the type III pantothenate kinase family. As to quaternary structure, homodimer. It depends on NH4(+) as a cofactor. K(+) is required as a cofactor.

It localises to the cytoplasm. It catalyses the reaction (R)-pantothenate + ATP = (R)-4'-phosphopantothenate + ADP + H(+). The protein operates within cofactor biosynthesis; coenzyme A biosynthesis; CoA from (R)-pantothenate: step 1/5. Catalyzes the phosphorylation of pantothenate (Pan), the first step in CoA biosynthesis. This Burkholderia ambifaria (strain MC40-6) protein is Type III pantothenate kinase.